Here is a 234-residue protein sequence, read N- to C-terminus: Large ribosomal subunit protein uL1 (234 aa).

It belongs to the universal ribosomal protein uL1 family. In terms of assembly, part of the 50S ribosomal subunit.

Functionally, binds directly to 23S rRNA. The L1 stalk is quite mobile in the ribosome, and is involved in E site tRNA release. In terms of biological role, protein L1 is also a translational repressor protein, it controls the translation of the L11 operon by binding to its mRNA. This Yersinia pseudotuberculosis serotype O:1b (strain IP 31758) protein is Large ribosomal subunit protein uL1.